Here is a 950-residue protein sequence, read N- to C-terminus: Synaptotagmin-like protein 2 (950 aa).

One can recognise a RabBD domain in the interval 1–57; that stretch reads MIDLSFLTEEEQDAILKVLQRDAALKRAEEERVRHLPEKIKDDQQLKNMSGQWFYEA. 3 disordered regions span residues 78 to 98, 116 to 289, and 361 to 620; these read RKKLPAAAEQNKDTAMRAKES, VEEP…ETLR, and ESDQ…SSSG. Basic and acidic residues predominate over residues 87–97; that stretch reads QNKDTAMRAKE. Polar residues-rich tracts occupy residues 140–150 and 173–183; these read IDMSQESTRTP and LQQTKPEQSKT. The segment covering 193 to 205 has biased composition (basic and acidic residues); the sequence is KEGELSESKEKSS. The span at 219–230 shows a compositional bias: polar residues; sequence QTVSTEPENASH. A compositionally biased stretch (basic and acidic residues) spans 246-264; that stretch reads NDLEKDDNQSFPRQRRDSL. Residues 434–445 show a composition bias toward polar residues; that stretch reads VESSSVINGQQE. Composition is skewed to basic and acidic residues over residues 479-502 and 531-544; these read HSFRDHRQGSEEEHSPVLKTLERR and ELVRSAEDDQKADQ. Over residues 557 to 567 the composition is skewed to polar residues; sequence TVPSLPDNQFS. Over residues 608 to 620 the composition is skewed to low complexity; the sequence is SPSSLTNLSSSSG. C2 domains lie at 644–769 and 784–913; these read VKGS…LKWY and NRGE…VDWM.

Monomer. Binds NRXN1. Binds RAB27A that has been activated by GTP-binding. Interacts with RAB27B. In terms of processing, isoform 1 is highly susceptible to proteolytic degradation and is stabilized by the interaction with RAB27A. As to expression, highly expressed in brain, lung, kidney, testis and in embryos after day 7. Detected at lower levels in skeletal muscle. Expressed in pancreatic alpha cells. Isoform 6 is highly expressed in brain, but not detectable in the other tissues tested. Isoform 1 is expressed abundantly in the stomach and is predominantly localized at the apical region of gastric-surface mucus cells. Isoform 11 is expressed in cytotoxic T-lymphocytes (CTL).

It is found in the melanosome membrane. The protein localises to the cell membrane. In terms of biological role, isoform 11 acts as a RAB27A effector protein and plays a role in cytotoxic granule exocytosis in lymphocytes. Required for cytotoxic granule docking at the immunologic synapse. Isoform 1 may play a role in melanosome transport and vesicle trafficking. It controls melanosome distribution in the cell periphery and regulates melanocyte morphology. Isoform 1 acts as a positive mediator of mucus secretion by the surface mucus cells of the stomach. Mediates basal mucus secretion by gastric surface cells by promoting the proper granule biognesis and docking of mucus granules with the apical plasma membrane. This chain is Synaptotagmin-like protein 2 (Sytl2), found in Mus musculus (Mouse).